We begin with the raw amino-acid sequence, 141 residues long: VLSAADKTNVKASWEKLGGHPGAFGGEALDRMFLSFPTTKTYFHHFDLSPGSSNLKTHGKKVADALANAAGHLDDLPGALSTLSDLHAHKLRVDPVNFKLLSHCLLVTLAAHMPADFTPAVHASLDKFLASVSTVLTSKYR.

Residues 1-141 (VLSAADKTNV…VSTVLTSKYR (141 aa)) enclose the Globin domain. Residue S3 is modified to Phosphoserine. K7 carries the post-translational modification N6-succinyllysine. T8 is subject to Phosphothreonine. Residue K11 is modified to N6-succinyllysine. K16 carries the N6-acetyllysine; alternate modification. The residue at position 16 (K16) is an N6-succinyllysine; alternate. S35 is subject to Phosphoserine. The residue at position 40 (K40) is an N6-succinyllysine. S49 carries the post-translational modification Phosphoserine. O2 is bound at residue H58. Residue H87 coordinates heme b. S102 is modified (phosphoserine). Residue T108 is modified to Phosphothreonine. A phosphoserine mark is found at S124 and S131. A phosphothreonine mark is found at T134 and T137. A Phosphoserine modification is found at S138.

This sequence belongs to the globin family. As to quaternary structure, heterotetramer of two alpha chains and two beta chains. Red blood cells.

Its function is as follows. Involved in oxygen transport from the lung to the various peripheral tissues. This Sciurus carolinensis (Eastern gray squirrel) protein is Hemoglobin subunit alpha.